Reading from the N-terminus, the 434-residue chain is Trigger factor (434 aa).

The 86-residue stretch at E161 to P246 folds into the PPIase FKBP-type domain.

This sequence belongs to the FKBP-type PPIase family. Tig subfamily.

It localises to the cytoplasm. The catalysed reaction is [protein]-peptidylproline (omega=180) = [protein]-peptidylproline (omega=0). Its function is as follows. Involved in protein export. Acts as a chaperone by maintaining the newly synthesized protein in an open conformation. Functions as a peptidyl-prolyl cis-trans isomerase. The protein is Trigger factor of Erwinia tasmaniensis (strain DSM 17950 / CFBP 7177 / CIP 109463 / NCPPB 4357 / Et1/99).